Here is a 211-residue protein sequence, read N- to C-terminus: Ribosome maturation factor RimM (211 aa).

The 72-residue stretch at 111-182 (PDAWYDHQLV…TLVVTPPLGL (72 aa)) folds into the PRC barrel domain. The disordered stretch occupies residues 184-211 (EEIPDETPTAEPTPAEAAEPAPEGDDAR). The span at 189-204 (ETPTAEPTPAEAAEPA) shows a compositional bias: low complexity.

The protein belongs to the RimM family. As to quaternary structure, binds ribosomal protein uS19.

The protein resides in the cytoplasm. Its function is as follows. An accessory protein needed during the final step in the assembly of 30S ribosomal subunit, possibly for assembly of the head region. Essential for efficient processing of 16S rRNA. May be needed both before and after RbfA during the maturation of 16S rRNA. It has affinity for free ribosomal 30S subunits but not for 70S ribosomes. This is Ribosome maturation factor RimM from Clavibacter michiganensis subsp. michiganensis (strain NCPPB 382).